We begin with the raw amino-acid sequence, 369 residues long: Transmembrane protein 144 homolog A (369 aa).

10 helical membrane-spanning segments follow: residues 6-26, 35-55, 63-83, 85-105, 122-142, 221-241, 256-276, 288-308, 318-338, and 347-367; these read VIGY…YVPV, LSYA…AMMI, PIGI…IPII, LVGL…VGFF, DWMN…FFFI, VAGI…MIPM, IIFS…MFYA, TVFP…GLMI, GYPI…VFYF, and LLIL…LAFS.

It belongs to the TMEM144 family.

The protein resides in the membrane. The sequence is that of Transmembrane protein 144 homolog A (tmem144A) from Dictyostelium discoideum (Social amoeba).